A 473-amino-acid chain; its full sequence is 6-phospho-beta-glucosidase (473 aa).

Residue glutamate 174 is the Proton donor of the active site. Glutamate 366 functions as the Nucleophile in the catalytic mechanism.

The protein belongs to the glycosyl hydrolase 1 family.

It catalyses the reaction 6-phospho-beta-D-glucosyl-(1-&gt;4)-D-glucose + H2O = D-glucose 6-phosphate + D-glucose. This chain is 6-phospho-beta-glucosidase (abgA), found in Clostridium longisporum.